A 463-amino-acid chain; its full sequence is tRNA-2-methylthio-N(6)-dimethylallyladenosine synthase (463 aa).

Residues 19–135 (GSYWITTFGC…LESLLNQVDS (117 aa)) form the MTTase N-terminal domain. Residues Cys28, Cys64, Cys98, Cys170, Cys174, and Cys177 each contribute to the [4Fe-4S] cluster site. One can recognise a Radical SAM core domain in the interval 156 to 393 (RDSSFCGWVN…NSLVENIAKE (238 aa)). A TRAM domain is found at 396-463 (QRYKNTSQEI…RPFSLTAKLL (68 aa)).

Belongs to the methylthiotransferase family. MiaB subfamily. As to quaternary structure, monomer. It depends on [4Fe-4S] cluster as a cofactor.

The protein localises to the cytoplasm. The enzyme catalyses N(6)-dimethylallyladenosine(37) in tRNA + (sulfur carrier)-SH + AH2 + 2 S-adenosyl-L-methionine = 2-methylsulfanyl-N(6)-dimethylallyladenosine(37) in tRNA + (sulfur carrier)-H + 5'-deoxyadenosine + L-methionine + A + S-adenosyl-L-homocysteine + 2 H(+). Its function is as follows. Catalyzes the methylthiolation of N6-(dimethylallyl)adenosine (i(6)A), leading to the formation of 2-methylthio-N6-(dimethylallyl)adenosine (ms(2)i(6)A) at position 37 in tRNAs that read codons beginning with uridine. This Prochlorococcus marinus (strain NATL1A) protein is tRNA-2-methylthio-N(6)-dimethylallyladenosine synthase.